A 525-amino-acid polypeptide reads, in one-letter code: GMP synthase [glutamine-hydrolyzing] (525 aa).

The Glutamine amidotransferase type-1 domain maps to 9–207 (RILILDFGSQ…VQDICGCEAL (199 aa)). Cys-86 functions as the Nucleophile in the catalytic mechanism. Residues His-181 and Glu-183 contribute to the active site. In terms of domain architecture, GMPS ATP-PPase spans 208–400 (WTASNIVEDA…LGLPYDMVYR (193 aa)). Position 235–241 (235–241 (SGGVDSS)) interacts with ATP.

As to quaternary structure, homodimer.

It carries out the reaction XMP + L-glutamine + ATP + H2O = GMP + L-glutamate + AMP + diphosphate + 2 H(+). The protein operates within purine metabolism; GMP biosynthesis; GMP from XMP (L-Gln route): step 1/1. In terms of biological role, catalyzes the synthesis of GMP from XMP. In Pseudomonas entomophila (strain L48), this protein is GMP synthase [glutamine-hydrolyzing].